The primary structure comprises 1095 residues: DNA polymerase delta catalytic subunit (1095 aa).

Positions 1 to 11 are enriched in basic residues; the sequence is MNRSGISKKRP. Residues 1 to 37 are disordered; it reads MNRSGISKKRPPPSNTPPPAGKHRATGDSTPSPAIGT. Zn(2+) is bound by residues cysteine 1007, cysteine 1010, cysteine 1020, and cysteine 1023. A CysA-type zinc finger spans residues 1007 to 1023; it reads CVGCKVPISNGTLCASC. 4 residues coordinate [4Fe-4S] cluster: cysteine 1052, cysteine 1055, cysteine 1065, and cysteine 1070. The CysB motif signature appears at 1052–1070; that stretch reads CQECQGSLHQDVLCTSRDC.

This sequence belongs to the DNA polymerase type-B family. Heterodimer with subunits of 125 kDa and 50 kDa. The 125 kDa subunit contains the polymerase active site and most likely the active site for the 3'-5' exonuclease activity. Requires [4Fe-4S] cluster as cofactor.

It is found in the nucleus. The enzyme catalyses DNA(n) + a 2'-deoxyribonucleoside 5'-triphosphate = DNA(n+1) + diphosphate. In terms of biological role, this polymerase possesses two enzymatic activities: DNA synthesis (polymerase) and an exonucleolytic activity that degrades single-stranded DNA in the 3'- to 5'-direction. The polypeptide is DNA polymerase delta catalytic subunit (POLD1) (Arabidopsis thaliana (Mouse-ear cress)).